A 409-amino-acid polypeptide reads, in one-letter code: Serine/threonine transporter SstT (409 aa).

A run of 8 helical transmembrane segments spans residues 24-44, 48-68, 82-102, 142-162, 194-214, 218-238, 292-312, and 319-339; these read LALGIVIGSVSPQLGLAAGLF, FVGALKAVAPVLVFILVAATI, IIVLYLIGTFSAALTAVIAGM, AIANANYIGILAWALVLGAAL, LGIFGLVSSTIAETGFGALAG, LLAVLLGCMAFIALAVNPAIV, IPLGATINMAGAAITITVLAM, and GITVDFATALLLSLVATVSAC.

This sequence belongs to the dicarboxylate/amino acid:cation symporter (DAACS) (TC 2.A.23) family.

It localises to the cell inner membrane. The enzyme catalyses L-serine(in) + Na(+)(in) = L-serine(out) + Na(+)(out). The catalysed reaction is L-threonine(in) + Na(+)(in) = L-threonine(out) + Na(+)(out). Functionally, involved in the import of serine and threonine into the cell, with the concomitant import of sodium (symport system). The protein is Serine/threonine transporter SstT of Neisseria meningitidis serogroup B (strain ATCC BAA-335 / MC58).